A 423-amino-acid polypeptide reads, in one-letter code: uncharacterized protein (423 aa).

This is an uncharacterized protein from Pasteurella multocida (strain Pm70).